A 489-amino-acid chain; its full sequence is Glycogen synthase (489 aa).

An ADP-alpha-D-glucose-binding site is contributed by Arg20.

The protein belongs to the glycosyltransferase 1 family. Bacterial/plant glycogen synthase subfamily.

It carries out the reaction [(1-&gt;4)-alpha-D-glucosyl](n) + ADP-alpha-D-glucose = [(1-&gt;4)-alpha-D-glucosyl](n+1) + ADP + H(+). Its pathway is glycan biosynthesis; glycogen biosynthesis. Its function is as follows. Synthesizes alpha-1,4-glucan chains using ADP-glucose. This chain is Glycogen synthase, found in Chlorobium limicola (strain DSM 245 / NBRC 103803 / 6330).